Consider the following 302-residue polypeptide: Probable protein S-acyltransferase 13 (302 aa).

Helical transmembrane passes span 17–37 and 56–76; these read SIMI…VVVV and VLAF…SVVV. In terms of domain architecture, DHHC spans 116–166; that stretch reads RYCRKCNQYKPPRSHHCSVCGRCILKMDHHCVWVVNCVGANNYKSFLLFLF. Cys-146 acts as the S-palmitoyl cysteine intermediate in catalysis. 2 helical membrane-spanning segments follow: residues 166–186 and 204–224; these read FYTF…FLVF and SFVA…FLIM.

The protein belongs to the DHHC palmitoyltransferase family.

It localises to the cell membrane. The protein localises to the cytoplasmic vesicle membrane. The catalysed reaction is L-cysteinyl-[protein] + hexadecanoyl-CoA = S-hexadecanoyl-L-cysteinyl-[protein] + CoA. Its function is as follows. Palmitoyl acyltransferase. In Arabidopsis thaliana (Mouse-ear cress), this protein is Probable protein S-acyltransferase 13 (PAT13).